The chain runs to 278 residues: Cation-dependent mannose-6-phosphate receptor (278 aa).

An N-terminal signal peptide occupies residues 1-21 (MFPFSGCWRTELLLLLLLAVA). Residues 22 to 186 (VRESWQIEEK…SLACSPEVSH (165 aa)) are Lumenal-facing. The MRH domain maps to 31–182 (KSCDLVGEKD…EMDSSLACSP (152 aa)). Cys33 and Cys79 are oxidised to a cystine. Asn58, Asn84, Asn95, Asn108, and Asn114 each carry an N-linked (GlcNAc...) asparagine glycan. Disulfide bonds link Cys133–Cys168 and Cys146–Cys180. The chain crosses the membrane as a helical span at residues 187–211 (LSVGSILLVIFASLVAVYIIGGFLY). Topologically, residues 212 to 278 (QRLVVGAKGM…EERDDHLLPM (67 aa)) are cytoplasmic. Residues 257–278 (RGVGDDQLGEESEERDDHLLPM) form a disordered region. At Ser268 the chain carries Phosphoserine.

In terms of assembly, homodimer. Binds GGA1, GGA2 and GGA3.

The protein localises to the lysosome membrane. Transport of phosphorylated lysosomal enzymes from the Golgi complex and the cell surface to lysosomes. Lysosomal enzymes bearing phosphomannosyl residues bind specifically to mannose-6-phosphate receptors in the Golgi apparatus and the resulting receptor-ligand complex is transported to an acidic prelyosomal compartment where the low pH mediates the dissociation of the complex. The sequence is that of Cation-dependent mannose-6-phosphate receptor (M6pr) from Mus musculus (Mouse).